Consider the following 442-residue polypeptide: UDP-N-acetylmuramate--L-alanine ligase (442 aa).

Residue 109 to 115 (GAHGKTS) participates in ATP binding.

Belongs to the MurCDEF family.

The protein resides in the cytoplasm. It carries out the reaction UDP-N-acetyl-alpha-D-muramate + L-alanine + ATP = UDP-N-acetyl-alpha-D-muramoyl-L-alanine + ADP + phosphate + H(+). Its pathway is cell wall biogenesis; peptidoglycan biosynthesis. In terms of biological role, cell wall formation. The polypeptide is UDP-N-acetylmuramate--L-alanine ligase (Streptococcus pyogenes serotype M49 (strain NZ131)).